The sequence spans 277 residues: Large ribosomal subunit protein uL2 (277 aa).

The tract at residues 226–277 is disordered; the sequence is NPIDHPHGGGEGRTSGGRHPVTPWGKPTKGKKTRSNKSTNKFILISRHKRKK.

Belongs to the universal ribosomal protein uL2 family. Part of the 50S ribosomal subunit. Forms a bridge to the 30S subunit in the 70S ribosome.

One of the primary rRNA binding proteins. Required for association of the 30S and 50S subunits to form the 70S ribosome, for tRNA binding and peptide bond formation. It has been suggested to have peptidyltransferase activity; this is somewhat controversial. Makes several contacts with the 16S rRNA in the 70S ribosome. This Rhodopseudomonas palustris (strain BisA53) protein is Large ribosomal subunit protein uL2.